The sequence spans 153 residues: Histone H2B.6 (153 aa).

Composition is skewed to basic and acidic residues over residues Met1–Pro28 and Glu36–Lys53. The disordered stretch occupies residues Met1–Lys60. Lys7 and Lys37 each carry N6-acetyllysine. Lys149 is covalently cross-linked (Glycyl lysine isopeptide (Lys-Gly) (interchain with G-Cter in ubiquitin)).

Belongs to the histone H2B family. In terms of assembly, the nucleosome is a histone octamer containing two molecules each of H2A, H2B, H3 and H4 assembled in one H3-H4 heterotetramer and two H2A-H2B heterodimers. The octamer wraps approximately 147 bp of DNA. Post-translationally, can be acetylated to form H2BK6ac and H2BK33ac. In terms of processing, monoubiquitinated by BRE1 to form H2BK143ub1 and deubiquitinated by UBP26. Required for heterochromatic histone H3 di- and trimethylation at H3K4me. May give a specific tag for epigenetic transcriptional activation.

It localises to the nucleus. The protein localises to the chromosome. Core component of nucleosome. Nucleosomes wrap and compact DNA into chromatin, limiting DNA accessibility to the cellular machineries which require DNA as a template. Histones thereby play a central role in transcription regulation, DNA repair, DNA replication and chromosomal stability. DNA accessibility is regulated via a complex set of post-translational modifications of histones, also called histone code, and nucleosome remodeling. This chain is Histone H2B.6 (H2B.6), found in Oryza sativa subsp. indica (Rice).